The primary structure comprises 211 residues: N,O-diacetylmuramidase (211 aa).

Residues aspartate 6 and glutamate 100 contribute to the active site. An intrachain disulfide couples cysteine 108 to cysteine 147.

It belongs to the glycosyl hydrolase 25 family.

Its subcellular location is the secreted. The protein resides in the extracellular space. The enzyme catalyses Hydrolysis of (1-&gt;4)-beta-linkages between N-acetylmuramic acid and N-acetyl-D-glucosamine residues in a peptidoglycan and between N-acetyl-D-glucosamine residues in chitodextrins.. This enzyme has both lysozyme (acetylmuramidase) and diacetylmuramidase activities. In Chalaropsis sp, this protein is N,O-diacetylmuramidase.